The chain runs to 296 residues: Glycine--tRNA ligase alpha subunit (296 aa).

Belongs to the class-II aminoacyl-tRNA synthetase family. Tetramer of two alpha and two beta subunits.

The protein localises to the cytoplasm. It carries out the reaction tRNA(Gly) + glycine + ATP = glycyl-tRNA(Gly) + AMP + diphosphate. This is Glycine--tRNA ligase alpha subunit from Synechococcus sp. (strain CC9605).